The following is a 739-amino-acid chain: Phosphoribosylformylglycinamidine synthase subunit PurL (739 aa).

The active site involves His54. ATP is bound by residues Tyr57 and Lys96. Glu98 contributes to the Mg(2+) binding site. Substrate-binding positions include 99 to 102 (SHNH) and Arg121. The active-site Proton acceptor is His100. Asp122 is a binding site for Mg(2+). Gln245 provides a ligand contact to substrate. Mg(2+) is bound at residue Asp273. Residue 317 to 319 (ESQ) coordinates substrate. Residues Asp500 and Gly537 each coordinate ATP. Asn538 serves as a coordination point for Mg(2+). Residue Ser540 coordinates substrate.

Belongs to the FGAMS family. As to quaternary structure, monomer. Part of the FGAM synthase complex composed of 1 PurL, 1 PurQ and 2 PurS subunits.

Its subcellular location is the cytoplasm. It catalyses the reaction N(2)-formyl-N(1)-(5-phospho-beta-D-ribosyl)glycinamide + L-glutamine + ATP + H2O = 2-formamido-N(1)-(5-O-phospho-beta-D-ribosyl)acetamidine + L-glutamate + ADP + phosphate + H(+). It functions in the pathway purine metabolism; IMP biosynthesis via de novo pathway; 5-amino-1-(5-phospho-D-ribosyl)imidazole from N(2)-formyl-N(1)-(5-phospho-D-ribosyl)glycinamide: step 1/2. In terms of biological role, part of the phosphoribosylformylglycinamidine synthase complex involved in the purines biosynthetic pathway. Catalyzes the ATP-dependent conversion of formylglycinamide ribonucleotide (FGAR) and glutamine to yield formylglycinamidine ribonucleotide (FGAM) and glutamate. The FGAM synthase complex is composed of three subunits. PurQ produces an ammonia molecule by converting glutamine to glutamate. PurL transfers the ammonia molecule to FGAR to form FGAM in an ATP-dependent manner. PurS interacts with PurQ and PurL and is thought to assist in the transfer of the ammonia molecule from PurQ to PurL. In Bacillus cytotoxicus (strain DSM 22905 / CIP 110041 / 391-98 / NVH 391-98), this protein is Phosphoribosylformylglycinamidine synthase subunit PurL.